A 372-amino-acid polypeptide reads, in one-letter code: Cyclin-dependent kinase 9 (372 aa).

The 297-residue stretch at 19-315 folds into the Protein kinase domain; the sequence is YEKLAKIGQG…SDDALNHDFF (297 aa). Residues 25 to 33 and K48 contribute to the ATP site; that span reads IGQGTFGEV. Residue D149 is the Proton acceptor of the active site. A disordered region spans residues 341-372; sequence PPRRRGGHMPQQPANQGRNPAATNQTEFDRVF. The span at 352 to 366 shows a compositional bias: polar residues; that stretch reads QPANQGRNPAATNQT.

Belongs to the protein kinase superfamily. CMGC Ser/Thr protein kinase family. CDC2/CDKX subfamily. Associates with cyclin-T to form P-TEFb. Also associates with cyclin-K.

The protein localises to the nucleus. It catalyses the reaction L-seryl-[protein] + ATP = O-phospho-L-seryl-[protein] + ADP + H(+). It carries out the reaction L-threonyl-[protein] + ATP = O-phospho-L-threonyl-[protein] + ADP + H(+). The enzyme catalyses [DNA-directed RNA polymerase] + ATP = phospho-[DNA-directed RNA polymerase] + ADP + H(+). Member of the cyclin-dependent kinase pair (CDK9/cyclin-T) complex, also called positive transcription elongation factor b (P-TEFb), which facilitates the transition from abortive to production elongation by phosphorylating the CTD (C-terminal domain) of the large subunit of RNA polymerase II (RNAP II), SUPT5H and RDBP. The CDK9/cyclin-K complex also has a kinase activity toward CTD of RNAP II and can substitute for P-TEFb in vitro. This chain is Cyclin-dependent kinase 9 (CDK9), found in Gallus gallus (Chicken).